We begin with the raw amino-acid sequence, 391 residues long: uncharacterized protein (391 aa).

The region spanning 235–330 is the HTH arsR-type domain; it reads VFILSRINLL…LYLKNETQKS (96 aa).

This is an uncharacterized protein from Methanocaldococcus jannaschii (strain ATCC 43067 / DSM 2661 / JAL-1 / JCM 10045 / NBRC 100440) (Methanococcus jannaschii).